A 356-amino-acid polypeptide reads, in one-letter code: UDP-N-acetylglucosamine--N-acetylmuramyl-(pentapeptide) pyrophosphoryl-undecaprenol N-acetylglucosamine transferase (356 aa).

UDP-N-acetyl-alpha-D-glucosamine-binding positions include 11-13 (TGG), Asn-117, Arg-160, Ser-188, and Gln-290.

It belongs to the glycosyltransferase 28 family. MurG subfamily.

It is found in the cell inner membrane. The catalysed reaction is di-trans,octa-cis-undecaprenyl diphospho-N-acetyl-alpha-D-muramoyl-L-alanyl-D-glutamyl-meso-2,6-diaminopimeloyl-D-alanyl-D-alanine + UDP-N-acetyl-alpha-D-glucosamine = di-trans,octa-cis-undecaprenyl diphospho-[N-acetyl-alpha-D-glucosaminyl-(1-&gt;4)]-N-acetyl-alpha-D-muramoyl-L-alanyl-D-glutamyl-meso-2,6-diaminopimeloyl-D-alanyl-D-alanine + UDP + H(+). Its pathway is cell wall biogenesis; peptidoglycan biosynthesis. Functionally, cell wall formation. Catalyzes the transfer of a GlcNAc subunit on undecaprenyl-pyrophosphoryl-MurNAc-pentapeptide (lipid intermediate I) to form undecaprenyl-pyrophosphoryl-MurNAc-(pentapeptide)GlcNAc (lipid intermediate II). This chain is UDP-N-acetylglucosamine--N-acetylmuramyl-(pentapeptide) pyrophosphoryl-undecaprenol N-acetylglucosamine transferase, found in Rickettsia bellii (strain RML369-C).